The chain runs to 311 residues: Beta-lactamase (311 aa).

The tat-type signal signal peptide spans 1–34 (MRLTQAPPSRRTLMTLGAGATMAALLPAGGAAYA). The active-site Acyl-ester intermediate is the Ser87. Substrate is bound at residue 255–257 (KTG).

Belongs to the class-A beta-lactamase family. Post-translationally, predicted to be exported by the Tat system. The position of the signal peptide cleavage has not been experimentally proven.

The catalysed reaction is a beta-lactam + H2O = a substituted beta-amino acid. The protein is Beta-lactamase (bla) of Kitasatospora aureofaciens (Streptomyces aureofaciens).